We begin with the raw amino-acid sequence, 146 residues long: UPF0178 protein BCAH187_A3092 (146 aa).

The protein belongs to the UPF0178 family.

The polypeptide is UPF0178 protein BCAH187_A3092 (Bacillus cereus (strain AH187)).